The primary structure comprises 427 residues: 5-hydroxybenzimidazole synthase BzaB (427 aa).

The protein belongs to the ThiC family. 5-hydroxybenzimidazole synthase subfamily. [4Fe-4S] cluster is required as a cofactor.

It catalyses the reaction 5-amino-1-(5-phospho-beta-D-ribosyl)imidazole + AH2 + S-adenosyl-L-methionine = 5-hydroxybenzimidazole + 5'-deoxyadenosine + formate + L-methionine + A + NH4(+) + phosphate + 2 H(+). It participates in cofactor biosynthesis; adenosylcobalamin biosynthesis. Together with BzaA, catalyzes the conversion of aminoimidazole ribotide (AIR) to 5-hydroxybenzimidazole (5-HBI) in a radical S-adenosyl-L-methionine (SAM)-dependent reaction. Is thus involved in the anaerobic biosynthesis of dimethylbenzimidazole (DMB), the lower axial ligand of vitamin B12 (cobalamin). Requires BzaA for catalytic activity, as BzaB alone displays no activity. The chain is 5-hydroxybenzimidazole synthase BzaB from Eubacterium limosum.